The following is a 373-amino-acid chain: mRNA-decapping enzyme subunit 2 (373 aa).

The 129-residue stretch at 106–234 (CRVPVTGAII…HGVSGLKLYM (129 aa)) folds into the Nudix hydrolase domain. The Nudix box motif lies at 139 to 160 (GKKSKDEEDHACAIREVLEETG). Mg(2+) is bound by residues Glu-154 and Glu-158. ATP-binding residues include Arg-178 and Tyr-233. The segment at 233–250 (YMVAPFLSSLKSWILKHP) is RNA binding. The disordered stretch occupies residues 275-342 (GNGTATVESQ…ESHNTKPVVD (68 aa)). The span at 298-323 (NSRKPELKRTTMESHSTKPELRKGTM) shows a compositional bias: basic and acidic residues. Polar residues predominate over residues 324 to 334 (ESHNTTATVES). The PDZ-binding signature appears at 370-373 (GNSA).

It belongs to the Nudix hydrolase family. DCP2 subfamily. In terms of assembly, homodimer. Catalytic component of the decapping complex. Interacts with DCP1, DCP5 and VCS. The cofactor is Mn(2+). Mg(2+) serves as cofactor. In terms of tissue distribution, expressed in seedlings, mostly in root tips, root hairs, and the vascular system. Also present in roots, leaves, stems, and flowers.

The protein localises to the cytoplasm. It localises to the P-body. The enzyme catalyses a 5'-end (N(7)-methyl 5'-triphosphoguanosine)-ribonucleoside in mRNA + H2O = N(7)-methyl-GDP + a 5'-end phospho-ribonucleoside in mRNA + 2 H(+). With respect to regulation, inhibited by the product 7-methyl GDP. Its function is as follows. Catalytic component of the decapping complex necessary for the degradation of mRNAs, both in normal mRNA turnover and in nonsense-mediated mRNA decay. Removes the 7-methyl guanine cap structure from mRNA molecules, yielding a 5'-phosphorylated mRNA fragment and 7m-GDP. Essential for postembryonic development, especially during the formation of the shoot apical meristem (SAM). This chain is mRNA-decapping enzyme subunit 2 (DCP2), found in Arabidopsis thaliana (Mouse-ear cress).